A 150-amino-acid polypeptide reads, in one-letter code: Avidin-related protein 6 (150 aa).

The first 24 residues, 1-24 (MVHATSPLLLLLLLSLALVAPGLS), serve as a signal peptide directing secretion. The Avidin-like domain occupies 26 to 147 (RKCSLTGEWD…GYNNFTRQRT (122 aa)). A disulfide bridge connects residues C28 and C105. Residues N36 and S40 each coordinate biotin. A glycan (N-linked (GlcNAc...) asparagine) is linked at N54. The biotin site is built by Y57, T59, and D63. N93 is a glycosylation site (N-linked (GlcNAc...) asparagine). Biotin is bound by residues S95, S99, and N140. N141 carries an N-linked (GlcNAc...) asparagine glycan.

It belongs to the avidin/streptavidin family. In terms of assembly, homotetramer. Post-translationally, glycosylated.

The protein localises to the secreted. In terms of biological role, forms a strong non-covalent specific complex with biotin. The sequence is that of Avidin-related protein 6 (AVR6) from Gallus gallus (Chicken).